Consider the following 311-residue polypeptide: Putative HTH-type transcriptional regulatory protein MTH_967 (311 aa).

The HTH cro/C1-type domain maps to 134–192 (LREVREEYNLSLKDLADLAHVSRKTIYKYENGLARASAETAMILEEILNIRITLSIDIF). The segment at residues 145 to 164 (LKDLADLAHVSRKTIYKYEN) is a DNA-binding region (H-T-H motif).

This is Putative HTH-type transcriptional regulatory protein MTH_967 from Methanothermobacter thermautotrophicus (strain ATCC 29096 / DSM 1053 / JCM 10044 / NBRC 100330 / Delta H) (Methanobacterium thermoautotrophicum).